The primary structure comprises 489 residues: Betaine aldehyde dehydrogenase (489 aa).

2 residues coordinate K(+): Thr26 and Asp93. 150–152 is a binding site for NAD(+); that stretch reads GAW. Catalysis depends on Lys162, which acts as the Charge relay system. 176–179 provides a ligand contact to NAD(+); that stretch reads KPSE. Position 180 (Val180) interacts with K(+). 229–232 contacts NAD(+); sequence GVET. Leu245 is a binding site for K(+). Glu251 (proton acceptor) is an active-site residue. 3 residues coordinate NAD(+): Gly253, Cys285, and Glu386. Residue Cys285 is the Nucleophile of the active site. The residue at position 285 (Cys285) is a Cysteine sulfenic acid (-SOH). The K(+) site is built by Lys456 and Gly459. The Charge relay system role is filled by Glu463.

This sequence belongs to the aldehyde dehydrogenase family. As to quaternary structure, dimer of dimers. K(+) serves as cofactor.

The enzyme catalyses betaine aldehyde + NAD(+) + H2O = glycine betaine + NADH + 2 H(+). It participates in amine and polyamine biosynthesis; betaine biosynthesis via choline pathway; betaine from betaine aldehyde: step 1/1. Functionally, involved in the biosynthesis of the osmoprotectant glycine betaine. Catalyzes the irreversible oxidation of betaine aldehyde to the corresponding acid. The polypeptide is Betaine aldehyde dehydrogenase (Burkholderia cenocepacia (strain ATCC BAA-245 / DSM 16553 / LMG 16656 / NCTC 13227 / J2315 / CF5610) (Burkholderia cepacia (strain J2315))).